Reading from the N-terminus, the 307-residue chain is N-acetylmuramic acid 6-phosphate etherase (307 aa).

In terms of domain architecture, SIS spans 59–222 (TADRLRQGGR…STGVMVKLGK (164 aa)). Residue glutamate 87 is the Proton donor of the active site. The active site involves glutamate 118.

Belongs to the GCKR-like family. MurNAc-6-P etherase subfamily. Homodimer.

It carries out the reaction N-acetyl-D-muramate 6-phosphate + H2O = N-acetyl-D-glucosamine 6-phosphate + (R)-lactate. Its pathway is amino-sugar metabolism; N-acetylmuramate degradation. Its function is as follows. Specifically catalyzes the cleavage of the D-lactyl ether substituent of MurNAc 6-phosphate, producing GlcNAc 6-phosphate and D-lactate. This chain is N-acetylmuramic acid 6-phosphate etherase, found in Nostoc sp. (strain PCC 7120 / SAG 25.82 / UTEX 2576).